The primary structure comprises 644 residues: Exoribonuclease 2 (644 aa).

An RNB domain is found at 189–516 (REDLTALDFV…NHRLLKAVIK (328 aa)). The region spanning 561–643 (DTRFAAEIVD…ETRSIIARPV (83 aa)) is the S1 motif domain.

The protein belongs to the RNR ribonuclease family. RNase II subfamily.

It localises to the cytoplasm. It catalyses the reaction Exonucleolytic cleavage in the 3'- to 5'-direction to yield nucleoside 5'-phosphates.. Functionally, involved in mRNA degradation. Hydrolyzes single-stranded polyribonucleotides processively in the 3' to 5' direction. The chain is Exoribonuclease 2 from Escherichia coli O17:K52:H18 (strain UMN026 / ExPEC).